Here is a 1236-residue protein sequence, read N- to C-terminus: ATP-dependent helicase/nuclease subunit A (1236 aa).

Positions 2-457 (AHWTIEQEEA…VDLNKNFRSH (456 aa)) constitute a UvrD-like helicase ATP-binding domain. 23-30 (AAAGSGKT) is an ATP binding site. One can recognise a UvrD-like helicase C-terminal domain in the interval 515–816 (NTAKRVEICI…RIMSIHKSKG (302 aa)).

It belongs to the helicase family. AddA subfamily. As to quaternary structure, heterodimer of AddA and AddB/RexB. Requires Mg(2+) as cofactor.

The catalysed reaction is Couples ATP hydrolysis with the unwinding of duplex DNA by translocating in the 3'-5' direction.. It carries out the reaction ATP + H2O = ADP + phosphate + H(+). Functionally, the heterodimer acts as both an ATP-dependent DNA helicase and an ATP-dependent, dual-direction single-stranded exonuclease. Recognizes the chi site generating a DNA molecule suitable for the initiation of homologous recombination. The AddA nuclease domain is required for chi fragment generation; this subunit has the helicase and 3' -&gt; 5' nuclease activities. In Syntrophomonas wolfei subsp. wolfei (strain DSM 2245B / Goettingen), this protein is ATP-dependent helicase/nuclease subunit A.